Reading from the N-terminus, the 306-residue chain is MPIKIPTELPAFKVLSNENIFVMNDSRAKTQDIRPLKIAILNLMPKKILAENQLLRHLSNTPLQVEVKLIQTKSYVSQNTPIEHLEKFYTYFDDIKDEKFDGLIITGAPVEQMAFEDITYWNELTEIMKWSKSNVFSTLHICWGAQAGLYYHYDIQKYKLEKKISGVFSHWVNDENADLTRGLDDIFYVPHSRHTEVKKEDINKISELEILSESKEAGIFIVATKDRRKIFFMGHPEYDRNTLKEEYMRDREKGDNVDIPQNYFVDNDINSTPKFTWRGSSNIIFGNWLNYCVYQNTPYDINDISK.

The Acyl-thioester intermediate role is filled by Cys-142. 2 residues coordinate substrate: Lys-163 and Ser-192. The active-site Proton acceptor is the His-235. Glu-237 is a catalytic residue. Position 249 (Arg-249) interacts with substrate.

It belongs to the MetA family.

The protein resides in the cytoplasm. It carries out the reaction L-homoserine + acetyl-CoA = O-acetyl-L-homoserine + CoA. It participates in amino-acid biosynthesis; L-methionine biosynthesis via de novo pathway; O-acetyl-L-homoserine from L-homoserine: step 1/1. Transfers an acetyl group from acetyl-CoA to L-homoserine, forming acetyl-L-homoserine. The sequence is that of Homoserine O-acetyltransferase from Clostridium botulinum (strain Eklund 17B / Type B).